The chain runs to 350 residues: Enoyl-[acyl-carrier-protein] reductase, mitochondrial (350 aa).

The N-terminal 14 residues, 1–14 (MNSTRNIISLVRRY), are a transit peptide targeting the mitochondrion. The Proton donor role is filled by Tyr69. Residues Asn143, 169–172 (NSMV), 192–194 (RDG), 261–264 (YGGM), 286–288 (FWL), and Lys343 each bind NADP(+).

The protein belongs to the zinc-containing alcohol dehydrogenase family. Quinone oxidoreductase subfamily. In terms of assembly, homodimer.

The protein localises to the mitochondrion. It catalyses the reaction a 2,3-saturated acyl-[ACP] + NADP(+) = a (2E)-enoyl-[ACP] + NADPH + H(+). In terms of biological role, catalyzes the NADPH-dependent reduction of trans-2-enoyl thioesters in mitochondrial fatty acid synthesis (fatty acid synthesis type II). Fatty acid chain elongation in mitochondria uses acyl carrier protein (ACP) as an acyl group carrier, but the enzyme accepts both ACP and CoA thioesters as substrates in vitro. This chain is Enoyl-[acyl-carrier-protein] reductase, mitochondrial (mecr), found in Dictyostelium discoideum (Social amoeba).